The chain runs to 319 residues: R-phycoerythrin gamma chain, chloroplastic (319 aa).

The N-terminal 71 residues, 1–71 (MDSPAFAVTG…RPKKLASYKR (71 aa)), are a transit peptide targeting the chloroplast. C96 and C135 together coordinate phycourobilin. A (2R,3E)-phycoerythrobilin-binding site is contributed by C212. C299 contributes to the phycourobilin binding site.

Heteromer of 4 alpha, 4 beta and one gamma chains. Contains four covalently linked bilin chromophores.

The protein resides in the plastid. Its subcellular location is the chloroplast thylakoid membrane. This chain is R-phycoerythrin gamma chain, chloroplastic, found in Corallina officinalis (Coral seaweed).